Reading from the N-terminus, the 239-residue chain is uncharacterized protein (239 aa).

7 helical membrane passes run 20–40, 48–68, 80–100, 106–126, 143–163, 164–184, and 192–212; these read ILIW…WLVL, FSSV…LGLL, WILL…GFHF, IYAM…TYLF, LILL…EILV, MIAG…DILH, and IPGA…VLYF.

Belongs to the cytomegalovirus US12 family.

It is found in the membrane. This is an uncharacterized protein from Homo sapiens (Human).